The primary structure comprises 142 residues: uncharacterized protein (142 aa).

This is an uncharacterized protein from Methanocaldococcus jannaschii (strain ATCC 43067 / DSM 2661 / JAL-1 / JCM 10045 / NBRC 100440) (Methanococcus jannaschii).